Consider the following 1654-residue polypeptide: MATDGASCEPDFSRSPEDAAGATAEPAKKEFDVDTLSKSELRMLLSVMEGELEARDLVIEALRARRKEVFIQERYGRFNLNDPFLALQRDYEAGAGDKEKKPVCTNPLSILEAVMAHCRKMQERMSTQLAAAESRQKKLEMEKLQLQALEQEHKKLSACLDEERNKNKHVVLMLVKECKQLSGKVIEEAQKLDEVMTKLEEEKKKTTALEEELSAEKQRSTEMEAQMEKQLSEFDTEREQLRAKLHREEAHTADLKEEIDKMKKMIEQLKRGSDSKPGLSLPRKTKDRRLISVSVGTEVSVTKSVACQTDSAIESIEPVKKLPLTVPAKPSTGSPLVSASTKGNMCTNATLVRPGIDRQASHGDLTISSVPAAPTPSASRTEENGPSTGSAPDPTSSTPPLPNNAAPPTVQTPGTAAQSYSQAPPVHSLHSPCANVSLHPGLNPRIQAARFRFQGNANDPDQNGNTSQSPPSRDVSPTSRDNLVAKQLARSTVTQALSRFTSPQTGAPPRPGAAPTGDVSSHTPVSRTSLKTPGVSRVDRGNPPPIPPKKPGLSQTPSPPHPQLKVIMDSSRAASAGVKVDNKTVAVPPSSLPQGNRVISEENLLKSSSPQLPPKPSIDLTVAPAGCAVSALATSQVGAWPAEPPGLNQPACSESSLVIPNTIAFCSSINPVSASSCRTGASVSLLVTASGWSPSLTPLLMSGGPAPLAGRPTLLQQAAAQGNVTLLSMLLNEEGLDINYSCEDGHSALYSAAKNGHTDCVRLLLNAQAQVNAADKNGFTPLCAAAAQGHFKCIELLIANDANINHAADGGQTPLYLACKNGNNECIKLLLGAGSDRSVKTRDGWTPVHAAVDTGNVDNLKLLMYYEAPIPGNSFNEEKLESNIIDLDQEEESPEGIPKTVVPADLINHADREGWTAAHIAASKGFKNCLEILCRHRGLEPERRDKCSRTAHDVATDDCKHLLENLHAFKIPLRISIAEIQPGNHGSDDFECDNIICTLNIRKQTSWDDFSKAVSQALINHFQAVSSDGWWTLEDMTFNNTADSSIGLGASSVQSIMLGNVPWSAGQNFTLFPWEFMRKNKAEQVTVILSGPQEGCLSSVSYTSMIPLQMLQNYLRLVEQYHNVIFHGPEGSLQDYIAHQLALCMKHRQIAAGFTCEIVKAQVHAGFSKEQLVDLFISSACLIPVKQSPVNKKIIIILENLEKSSLSELLGDFLTPLENRSTETPYTLQKGNGMSECYYFHENCFLMGTIAKACLQGSDLLVQQHFRWVQLRWDGEPMQGLLQRFLRRKVVNKFRGQLPSPCDPVCRTVDWALAVWCQLNSCIARLGTPEALLGPKYFLSCPVVPGHAQATVKWMSHLWNAIIAPRVQEAILSRASVKRQHSLGQTTAKKHPSQGQQAIVKAALSILLNKAVLHGCPLQRAELDQHTADFKGGSFPLSMVSSYNSCSRKKAESGAWRKVSTSPRKKSGHFSSPVWNKPDLSEEGIKNKAISQLNYNGSALLAKQKSLENDLSLTLDQRLSLGSDDETDLVKELQNMCSSKSESDISKIADSRDDLRRLHSSGNNPAFSAAVNNPKMPVSQKEVSPLSSHQTTECSNNKSKTELGVSRVRSFLPVPRSKVTQCSQNTKRSSSSSNTRQIEINNNSKEEIWNLRKK.

Residues 1–31 form a disordered region; the sequence is MATDGASCEPDFSRSPEDAAGATAEPAKKEF. Residues 119 to 276 are a coiled coil; sequence RKMQERMSTQ…EQLKRGSDSK (158 aa). Disordered stretches follow at residues 361-432, 455-480, and 495-596; these read SHGD…LHSP, GNANDPDQNGNTSQSPPSRDVSPTSR, and QALS…PQGN. Low complexity predominate over residues 368 to 379; that stretch reads SSVPAAPTPSAS. 2 stretches are compositionally biased toward polar residues: residues 384–395 and 411–422; these read NGPSTGSAPDPT and QTPGTAAQSYSQ. Asymmetric dimethylarginine is present on arginine 499. Positions 518-531 are enriched in polar residues; sequence DVSSHTPVSRTSLK. ANK repeat units follow at residues 710–740, 744–773, 777–806, 810–839, 843–872, and 913–943; these read GRPTLLQQAAAQGNVTLLSMLLNEEGLDINY, DGHSALYSAAKNGHTDCVRLLLNAQAQVNA, NGFTPLCAAAAQGHFKCIELLIANDANINH, GGQTPLYLACKNGNNECIKLLLGAGSDRSV, DGWTPVHAAVDTGNVDNLKLLMYYEAPIPG, and EGWTAAHIAASKGFKNCLEILCRHRGLEPER. Residues 1454–1478 form a disordered region; the sequence is GAWRKVSTSPRKKSGHFSSPVWNKP. Serine 1523 carries the post-translational modification Phosphoserine. The disordered stretch occupies residues 1556–1654; that stretch reads RRLHSSGNNP…KEEIWNLRKK (99 aa). The segment covering 1581-1598 has biased composition (polar residues); that stretch reads KEVSPLSSHQTTECSNNK. Positions 1623–1637 are enriched in low complexity; that stretch reads SQNTKRSSSSSNTRQ. Positions 1644–1654 are enriched in basic and acidic residues; sequence SKEEIWNLRKK.

Interacts with CTTN/cortactin SH3 domain. Interacts with STRN, STRN4/zinedin and MOB4/phocein; this interactions mediate the association with the STRIPAK core complex and may regulate dendritic spine distribution of the STRIPAK complex in hippocampal neurons. Activation of glutamate receptors weakens the interaction with STRN and STRN4.

Its subcellular location is the cytoplasm. It is found in the cell cortex. It localises to the cell projection. The protein resides in the dendritic spine. In terms of biological role, regulates the dendritic spine distribution of CTTN/cortactin in hippocampal neurons, and thus controls dendritic spinogenesis and dendritic spine maintenance. Associates with the striatin-interacting phosphatase and kinase (STRIPAK) core complex to regulate dendritic spine distribution of the STRIPAK complex in hippocampal neurons. In Atelerix albiventris (Middle-African hedgehog), this protein is Cortactin-binding protein 2 (CTTNBP2).